We begin with the raw amino-acid sequence, 394 residues long: Serine palmitoyltransferase (394 aa).

Pyridoxal 5'-phosphate is bound by residues 111-112, Ser-183, His-211, and Thr-239; that span reads GF. Position 242 is an N6-(pyridoxal phosphate)lysine (Lys-242).

It belongs to the class-II pyridoxal-phosphate-dependent aminotransferase family. It depends on pyridoxal 5'-phosphate as a cofactor.

The enzyme catalyses L-serine + hexadecanoyl-CoA + H(+) = 3-oxosphinganine + CO2 + CoA. It participates in lipid metabolism; sphingolipid metabolism. Involved in de novo bacterial ceramide synthesis. Catalyzes the condensation of L-serine with palmitoyl-CoA (hexadecanoyl-CoA) to produce 3-oxosphinganine. Also capable of using alanine as substrate leading to the formation of 1-deoxysphinganine (1-deoxySa). Contributes to the levels of endogenous sphingolipids in its host. The chain is Serine palmitoyltransferase from Bacteroides ovatus (strain ATCC 8483 / DSM 1896 / JCM 5824 / BCRC 10623 / CCUG 4943 / NCTC 11153).